We begin with the raw amino-acid sequence, 199 residues long: Acireductone dioxygenase 1 (199 aa).

Fe(2+) contacts are provided by H99, H101, E105, and H144. 4 residues coordinate Ni(2+): H99, H101, E105, and H144.

The protein belongs to the acireductone dioxygenase (ARD) family. Fe(2+) serves as cofactor. Requires Ni(2+) as cofactor.

It is found in the cytoplasm. It localises to the nucleus. The catalysed reaction is 1,2-dihydroxy-5-(methylsulfanyl)pent-1-en-3-one + O2 = 4-methylsulfanyl-2-oxobutanoate + formate + 2 H(+). It catalyses the reaction 1,2-dihydroxy-5-(methylsulfanyl)pent-1-en-3-one + O2 = 3-(methylsulfanyl)propanoate + CO + formate + 2 H(+). It functions in the pathway amino-acid biosynthesis; L-methionine biosynthesis via salvage pathway; L-methionine from S-methyl-5-thio-alpha-D-ribose 1-phosphate: step 5/6. Catalyzes 2 different reactions between oxygen and the acireductone 1,2-dihydroxy-3-keto-5-methylthiopentene (DHK-MTPene) depending upon the metal bound in the active site. Fe-containing acireductone dioxygenase (Fe-ARD) produces formate and 2-keto-4-methylthiobutyrate (KMTB), the alpha-ketoacid precursor of methionine in the methionine recycle pathway. Ni-containing acireductone dioxygenase (Ni-ARD) produces methylthiopropionate, carbon monoxide and formate, and does not lie on the methionine recycle pathway. This is Acireductone dioxygenase 1 (ARD1) from Oryza sativa subsp. indica (Rice).